Consider the following 364-residue polypeptide: Tubulin alpha-2 chain (364 aa).

GTP is bound by residues Gly-59, Thr-60, Thr-94, Asn-121, and Asn-144. Residue Glu-170 is part of the active site.

The protein belongs to the tubulin family. Dimer of alpha and beta chains. A typical microtubule is a hollow water-filled tube with an outer diameter of 25 nm and an inner diameter of 15 nM. Alpha-beta heterodimers associate head-to-tail to form protofilaments running lengthwise along the microtubule wall with the beta-tubulin subunit facing the microtubule plus end conferring a structural polarity. Microtubules usually have 13 protofilaments but different protofilament numbers can be found in some organisms and specialized cells. The cofactor is Mg(2+). Undergoes a tyrosination/detyrosination cycle, the cyclic removal and re-addition of a C-terminal tyrosine residue by the enzymes tubulin tyrosine carboxypeptidase (TTCP) and tubulin tyrosine ligase (TTL), respectively.

Its subcellular location is the cytoplasm. The protein resides in the cytoskeleton. The enzyme catalyses GTP + H2O = GDP + phosphate + H(+). Its function is as follows. Tubulin is the major constituent of microtubules, a cylinder consisting of laterally associated linear protofilaments composed of alpha- and beta-tubulin heterodimers. Microtubules grow by the addition of GTP-tubulin dimers to the microtubule end, where a stabilizing cap forms. Below the cap, tubulin dimers are in GDP-bound state, owing to GTPase activity of alpha-tubulin. The protein is Tubulin alpha-2 chain (TUBA2) of Anemia phyllitidis (Fern).